Here is a 993-residue protein sequence, read N- to C-terminus: Desmoglein-3 (993 aa).

The first 23 residues, M1 to G23, serve as a signal peptide directing secretion. A propeptide spanning residues E24–R48 is cleaved from the precursor. 4 consecutive Cadherin domains span residues R48 to F156, S157 to F266, K267 to S386, and H383 to V494. Residues E49 to S617 are Extracellular-facing. N109 and N179 each carry an N-linked (GlcNAc...) asparagine glycan. 2 N-linked (GlcNAc...) asparagine glycosylation sites follow: N458 and N544. The helical transmembrane segment at A618–L638 threads the bilayer. Over T639–I993 the chain is Cytoplasmic. Residues D641 to E713 form a required for interaction with CTNND1 and localization at cell-cell junctions region. Desmoglein repeat repeat units lie at residues L903–E929 and T930–I960.

Homodimer. Part of a complex that contains DSG3, PKP1, YAP1 and YWHAG; the complex is required for localization of DSG3 and YAP1 to the cell membrane in keratinocytes. Interacts with PKP2. Interacts with CTNND1; the interaction facilitates DSG3 localization and retention at cell-cell junctions. Interacts with CDH1; the interaction is required for CDH1 localization to developing adherens junctions. Interacts with RAC1; the interaction is required for DSG3 translocation to cell-cell junctions, organization of cortical F-actin bundles and actin anchoring at cell-cell junctions. Interacts with DSC3; the interaction may limit the interaction of DSC3 with p38MAPK family members and therefore repress p38MAPK signaling activation.

The protein resides in the cell membrane. It is found in the cell junction. The protein localises to the desmosome. Its subcellular location is the cytoplasm. It localises to the tight junction. In terms of biological role, a component of desmosome cell-cell junctions which are required for positive regulation of cellular adhesion. Required for adherens and desmosome junction assembly in response to mechanical force in keratinocytes. Required for desmosome-mediated cell-cell adhesion of cells surrounding the telogen hair club and the basal layer of the outer root sheath epithelium, consequently is essential for the anchoring of telogen hairs in the hair follicle. Required for the maintenance of the epithelial barrier via promoting desmosome-mediated intercellular attachment of suprabasal epithelium to basal cells. May play a role in the protein stability of the desmosome plaque components DSP, JUP, PKP1, PKP2 and PKP3. Required for YAP1 localization at the plasma membrane in keratinocytes in response to mechanical strain, via the formation of an interaction complex composed of DSG3, PKP1 and YWHAG. May also be involved in the positive regulation of YAP1 target gene transcription and as a result cell proliferation. Positively regulates cellular contractility and cell junction formation via organization of cortical F-actin bundles and anchoring of actin to tight junctions, in conjunction with RAC1. The cytoplasmic pool of DSG3 is required for the localization of CDH1 and CTNNB1 at developing adherens junctions, potentially via modulation of SRC activity. Inhibits keratinocyte migration via suppression of p38MAPK signaling, may therefore play a role in moderating wound healing. This Canis lupus familiaris (Dog) protein is Desmoglein-3 (DSG3).